A 150-amino-acid polypeptide reads, in one-letter code: 3-dehydroquinate dehydratase (150 aa).

The active-site Proton acceptor is Tyr-26. Positions 77, 83, and 90 each coordinate substrate. Residue His-103 is the Proton donor of the active site. Residues 104–105 and Arg-114 contribute to the substrate site; that span reads LS.

Belongs to the type-II 3-dehydroquinase family. Homododecamer.

It catalyses the reaction 3-dehydroquinate = 3-dehydroshikimate + H2O. It functions in the pathway metabolic intermediate biosynthesis; chorismate biosynthesis; chorismate from D-erythrose 4-phosphate and phosphoenolpyruvate: step 3/7. Catalyzes a trans-dehydration via an enolate intermediate. In Photobacterium profundum (strain SS9), this protein is 3-dehydroquinate dehydratase.